Here is a 559-residue protein sequence, read N- to C-terminus: Tectonic-like complex member MKS1 (559 aa).

The region spanning 311-439 is the C2 B9-type domain; that stretch reads LRLFVNGEVV…TVSTWRPVEL (129 aa).

As to quaternary structure, part of the tectonic-like complex (also named B9 complex). Interacts with TMEM107. Interacts with TCTN3, AHI1, TCTN1, TCTN2, CC2D2A. Interacts with FLNA. Interacts with TMEM67. Interacts with B9D1 and B9D2.

The protein localises to the cytoplasm. It is found in the cytoskeleton. Its subcellular location is the cilium basal body. It localises to the microtubule organizing center. The protein resides in the centrosome. Its function is as follows. Component of the tectonic-like complex, a complex localized at the transition zone of primary cilia and acting as a barrier that prevents diffusion of transmembrane proteins between the cilia and plasma membranes. Involved in centrosome migration to the apical cell surface during early ciliogenesis. Required for ciliary structure and function, including a role in regulating length and appropriate number through modulating centrosome duplication. Required for cell branching morphology. The sequence is that of Tectonic-like complex member MKS1 (MKS1) from Homo sapiens (Human).